A 155-amino-acid chain; its full sequence is Endoribonuclease YbeY (155 aa).

H114, H118, and H124 together coordinate Zn(2+).

This sequence belongs to the endoribonuclease YbeY family. Zn(2+) is required as a cofactor.

It localises to the cytoplasm. Single strand-specific metallo-endoribonuclease involved in late-stage 70S ribosome quality control and in maturation of the 3' terminus of the 16S rRNA. This is Endoribonuclease YbeY from Citrobacter koseri (strain ATCC BAA-895 / CDC 4225-83 / SGSC4696).